The sequence spans 531 residues: Serine-type carboxypeptidase F (531 aa).

The N-terminal stretch at 1–25 (MLFRSLLSTAVLAVSLCTDNASAAK) is a signal peptide. N-linked (GlcNAc...) asparagine glycosylation occurs at Asn20. The propeptide occupies 26 to 52 (HGRFGQKARDAMNIAKRSANAVKHSLK). Asn63, Asn94, and Asn155 each carry an N-linked (GlcNAc...) asparagine glycan. Ser211 is a catalytic residue. N-linked (GlcNAc...) asparagine glycans are attached at residues Asn228, Asn271, Asn309, and Asn378. Asp430 is an active-site residue. Asn436 and Asn444 each carry an N-linked (GlcNAc...) asparagine glycan. Residue His507 is part of the active site.

This sequence belongs to the peptidase S10 family. As to quaternary structure, monomer.

Inhibited by DFP, and Hg(Cl)2. In terms of biological role, removes any amino acid from the C-terminus of a long peptide. Digests preferentially peptides containing a positively charged residue in P1' position, as well as arginine, lysine or phenylalanine in P1 position of ester substrate. Also catalyzes peptide synthesis. The protein is Serine-type carboxypeptidase F (pepF) of Aspergillus niger.